The following is a 6713-amino-acid chain: Extracellular matrix-binding protein EbhA (6713 aa).

44 FIVAR domains span residues 1-58 (MGNL…VEQA), 126-184 (AMGQ…VTAA), 252-310 (AMKG…ITQA), 378-436 (QMGN…VEAA), 504-562 (AMAN…VENA), 630-688 (AMGT…INQI), 756-814 (AMGQ…VDRA), 882-940 (AMNS…VDNA), 1008-1066 (AMGA…INDM), 1134-1192 (AMTA…VNSA), 1260-1318 (AMKG…ITQA), 1386-1444 (AMHS…VEQA), 1512-1570 (AMGQ…VERA), 1638-1696 (AMTA…VTNA), 1764-1822 (AMKG…INQA), 1890-1948 (AMTN…VETA), 2142-2200 (AMNQ…INQK), 2268-2325 (AMGN…VQAA), 2393-2451 (AMGQ…VEAA), 2519-2577 (AMQR…VEQA), 2645-2703 (AMDQ…VTAA), 2771-2829 (AMNQ…VTQA), 2897-2955 (AMER…VEAA), 3023-3081 (AMGN…VEAA), 3149-3207 (AMDK…INQA), 3275-3333 (AMGN…VEQA), 3401-3459 (AMTQ…ITAA), 3527-3585 (AMTQ…IQQA), 3653-3711 (AMTN…VEQA), 3779-3837 (AMTQ…VAQA), 3905-3963 (AMGT…VTKA), 4031-4089 (AMGN…ITRA), 4157-4218 (AMDQ…ITNE), 4283-4341 (AMEL…VNGA), 4409-4467 (AMGN…VEQA), 4535-4592 (AMHG…INQV), 4660-4718 (LMDA…VSSA), 4786-4844 (AMKA…IDQA), 4912-4970 (AMEA…VEQL), 5038-5096 (AMQA…VEQL), 5164-5222 (AMET…VEQA), 5290-5344 (SMDQ…VDQA), 5412-5471 (AMDQ…VIKL), and 5666-5722 (AMET…INGA). Residues 6518-6540 (VIKNAIGVVGISGLLASFWFFIA) form a helical membrane-spanning segment. Residues 6616 to 6713 (RRKEDEEDVE…KKKKSKKNKK (98 aa)) are disordered. 2 stretches are compositionally biased toward basic and acidic residues: residues 6631 to 6641 (TDEKVLKDNEH) and 6680 to 6690 (QKDNQSKDKKS). Residues 6695–6713 (TSKKVAAKKKKKKSKKNKK) are compositionally biased toward basic residues.

Its subcellular location is the cell membrane. This chain is Extracellular matrix-binding protein EbhA (ebhA), found in Staphylococcus aureus (strain Mu3 / ATCC 700698).